The chain runs to 313 residues: Tyrosine--tRNA ligase (313 aa).

Position 32 (tyrosine 32) interacts with L-tyrosine. A 'HIGH' region motif is present at residues 37 to 45; sequence PSGEIHLGH. L-tyrosine contacts are provided by tyrosine 152, glutamine 156, aspartate 159, and glutamine 174. The 'KMSKS' region motif lies at 208–212; it reads KMSSS. ATP is bound at residue serine 211.

It belongs to the class-I aminoacyl-tRNA synthetase family. TyrS type 3 subfamily. As to quaternary structure, homodimer.

It is found in the cytoplasm. It catalyses the reaction tRNA(Tyr) + L-tyrosine + ATP = L-tyrosyl-tRNA(Tyr) + AMP + diphosphate + H(+). In terms of biological role, catalyzes the attachment of tyrosine to tRNA(Tyr) in a two-step reaction: tyrosine is first activated by ATP to form Tyr-AMP and then transferred to the acceptor end of tRNA(Tyr). The sequence is that of Tyrosine--tRNA ligase from Methanospirillum hungatei JF-1 (strain ATCC 27890 / DSM 864 / NBRC 100397 / JF-1).